Consider the following 364-residue polypeptide: Alanine racemase (364 aa).

Lys-34 functions as the Proton acceptor; specific for D-alanine in the catalytic mechanism. Residue Lys-34 is modified to N6-(pyridoxal phosphate)lysine. A substrate-binding site is contributed by Arg-129. Residue Tyr-259 is the Proton acceptor; specific for L-alanine of the active site. Met-307 lines the substrate pocket.

This sequence belongs to the alanine racemase family. Pyridoxal 5'-phosphate is required as a cofactor.

It carries out the reaction L-alanine = D-alanine. Its pathway is amino-acid biosynthesis; D-alanine biosynthesis; D-alanine from L-alanine: step 1/1. In terms of biological role, catalyzes the interconversion of L-alanine and D-alanine. May also act on other amino acids. The protein is Alanine racemase (alr) of Coxiella burnetii (strain CbuK_Q154) (Coxiella burnetii (strain Q154)).